The chain runs to 58 residues: Small ribosomal subunit protein eS31 (58 aa).

Residues C29, C32, C48, and C51 each contribute to the Zn(2+) site. The C4-type zinc-finger motif lies at 29-51; sequence CPRCGSFMAHHLKPVPRWHCGKC.

This sequence belongs to the eukaryotic ribosomal protein eS31 family. Part of the 30S ribosomal subunit. The cofactor is Zn(2+).

The chain is Small ribosomal subunit protein eS31 from Ignicoccus hospitalis (strain KIN4/I / DSM 18386 / JCM 14125).